The primary structure comprises 78 residues: D-alanyl carrier protein (78 aa).

The Carrier domain maps to 1–78 (MEFKNQVYGI…HIAEQLAEMK (78 aa)). O-(pantetheine 4'-phosphoryl)serine is present on S36.

This sequence belongs to the DltC family. 4'-phosphopantetheine is transferred from CoA to a specific serine of apo-DCP.

The protein localises to the cytoplasm. It participates in cell wall biogenesis; lipoteichoic acid biosynthesis. Its function is as follows. Carrier protein involved in the D-alanylation of lipoteichoic acid (LTA). The loading of thioester-linked D-alanine onto DltC is catalyzed by D-alanine--D-alanyl carrier protein ligase DltA. The DltC-carried D-alanyl group is further transferred to cell membrane phosphatidylglycerol (PG) by forming an ester bond, probably catalyzed by DltD. D-alanylation of LTA plays an important role in modulating the properties of the cell wall in Gram-positive bacteria, influencing the net charge of the cell wall. The chain is D-alanyl carrier protein from Bacillus pumilus (strain SAFR-032).